Here is a 208-residue protein sequence, read N- to C-terminus: 3-demethoxyubiquinol 3-hydroxylase (208 aa).

Fe cation-binding residues include Glu-57, Glu-87, His-90, Glu-139, Glu-171, and His-174.

It belongs to the COQ7 family. Fe cation is required as a cofactor.

It localises to the cell membrane. It carries out the reaction a 5-methoxy-2-methyl-3-(all-trans-polyprenyl)benzene-1,4-diol + AH2 + O2 = a 3-demethylubiquinol + A + H2O. Its pathway is cofactor biosynthesis; ubiquinone biosynthesis. Catalyzes the hydroxylation of 2-nonaprenyl-3-methyl-6-methoxy-1,4-benzoquinol during ubiquinone biosynthesis. The sequence is that of 3-demethoxyubiquinol 3-hydroxylase from Nitrosospira multiformis (strain ATCC 25196 / NCIMB 11849 / C 71).